Consider the following 528-residue polypeptide: Chaperonin GroEL, chloroplastic (528 aa).

Residues 29-32 (TLGP), 86-90 (DGTTT), G415, 481-483 (NAA), and D497 contribute to the ATP site.

This sequence belongs to the chaperonin (HSP60) family. In terms of assembly, forms a cylinder of 14 subunits composed of two heptameric rings stacked back-to-back. Interacts with the co-chaperonin GroES.

It is found in the plastid. Its subcellular location is the chloroplast. It carries out the reaction ATP + H2O + a folded polypeptide = ADP + phosphate + an unfolded polypeptide.. Its function is as follows. Together with its co-chaperonin GroES, plays an essential role in assisting protein folding. The GroEL-GroES system forms a nano-cage that allows encapsulation of the non-native substrate proteins and provides a physical environment optimized to promote and accelerate protein folding. This Trieres chinensis (Marine centric diatom) protein is Chaperonin GroEL, chloroplastic.